The sequence spans 304 residues: Homoserine kinase (304 aa).

An ATP-binding site is contributed by 92–102 (PLARGLGSSAT).

It belongs to the GHMP kinase family. Homoserine kinase subfamily.

It is found in the cytoplasm. The enzyme catalyses L-homoserine + ATP = O-phospho-L-homoserine + ADP + H(+). The protein operates within amino-acid biosynthesis; L-threonine biosynthesis; L-threonine from L-aspartate: step 4/5. Its function is as follows. Catalyzes the ATP-dependent phosphorylation of L-homoserine to L-homoserine phosphate. The chain is Homoserine kinase from Nostoc punctiforme (strain ATCC 29133 / PCC 73102).